Consider the following 198-residue polypeptide: MPKVGMPKIRRPQLVSATMTVIDRVGLHGASVSLISQEAGVSSGIINHYFGGKHGLLEETMRDILRQLSCDATKRLNSLPKQAHMQRINAILDANFVGFQSESKVIKTWLAFWSYSMHDEALKRLQRVNEKRLLSHLKRELKALMSKEQADIVAQGIAALIDGIWLRGALNPEGINANKARIIINDYLEKQLTFYSQQ.

Residues 8–68 (KIRRPQLVSA…ETMRDILRQL (61 aa)) form the HTH tetR-type domain. Positions 31 to 50 (SVSLISQEAGVSSGIINHYF) form a DNA-binding region, H-T-H motif.

Its pathway is amine and polyamine biosynthesis; betaine biosynthesis via choline pathway [regulation]. Functionally, repressor involved in the biosynthesis of the osmoprotectant glycine betaine. It represses transcription of the choline transporter BetT and the genes of BetAB involved in the synthesis of glycine betaine. This Vibrio vulnificus (strain YJ016) protein is HTH-type transcriptional regulator BetI.